We begin with the raw amino-acid sequence, 188 residues long: Peptidyl-tRNA hydrolase (188 aa).

Tyrosine 14 lines the tRNA pocket. The Proton acceptor role is filled by histidine 19. TRNA is bound by residues tyrosine 64, asparagine 66, and asparagine 112.

This sequence belongs to the PTH family. In terms of assembly, monomer.

Its subcellular location is the cytoplasm. The enzyme catalyses an N-acyl-L-alpha-aminoacyl-tRNA + H2O = an N-acyl-L-amino acid + a tRNA + H(+). In terms of biological role, hydrolyzes ribosome-free peptidyl-tRNAs (with 1 or more amino acids incorporated), which drop off the ribosome during protein synthesis, or as a result of ribosome stalling. Catalyzes the release of premature peptidyl moieties from peptidyl-tRNA molecules trapped in stalled 50S ribosomal subunits, and thus maintains levels of free tRNAs and 50S ribosomes. This chain is Peptidyl-tRNA hydrolase, found in Leuconostoc mesenteroides subsp. mesenteroides (strain ATCC 8293 / DSM 20343 / BCRC 11652 / CCM 1803 / JCM 6124 / NCDO 523 / NBRC 100496 / NCIMB 8023 / NCTC 12954 / NRRL B-1118 / 37Y).